Here is a 440-residue protein sequence, read N- to C-terminus: MESQQLSQHSPISHGSACASVTSKEVQTTQDPLDISASKTEECEKVSTQANSQQPTTPLSSAVPENHHHASPQAAQVPLPQNGPYPQQRMMNTQQANISGWPVYGHPSLMPYPPYQMSPMYAPPGAQSQFTQYPQYVGTHLNTPSPESGNSFPDSSSAKSNMTSTNQHVRPPPILTSPNDFLNWVKIYIKFLQNSNLGDIIPTATRKAVRQMTDDELTFLCHTFQLFAPSQFLPPWVKDILSVDYTDIMKILSKSINKMQSDTQEVNDITTLATLHYNGSTPADAFEAEVTNILDRLNNNGIPINNKVACQFIMRGLSGEYKFLRYARHRCIHMTVADLFSDIHSMYEEQQESKRNKSTHRRSPSDEKKDSRTYTNTTKPKSITRNSQKPNNSQSRTARAHNVSTFNNSPGPDNDLIRGSTTEPIQLKNTHDLHLRPGTY.

Polar residues-rich tracts occupy residues 1 to 31 (MESQQLSQHSPISHGSACASVTSKEVQTTQD), 46 to 60 (VSTQANSQQPTTPLS), and 137 to 168 (VGTHLNTPSPESGNSFPDSSSAKSNMTSTNQH). Disordered regions lie at residues 1–88 (MESQ…YPQQ), 137–174 (VGTHLNTPSPESGNSFPDSSSAKSNMTSTNQHVRPPPI), and 350–424 (QQES…TTEP). The interval 299 to 401 (NNGIPINNKV…NSQSRTARAH (103 aa)) is RNA-binding. A compositionally biased stretch (basic and acidic residues) spans 363–372 (SPSDEKKDSR). A compositionally biased stretch (polar residues) spans 373-411 (TYTNTTKPKSITRNSQKPNNSQSRTARAHNVSTFNNSPG).

As to quaternary structure, homotrimer.

The protein localises to the cytoplasm. Functionally, capsid protein (CA) is the structural component of the virus-like particle (VLP), forming the shell that encapsulates the retrotransposons dimeric RNA genome. The particles are assembled from trimer-clustered units and there are holes in the capsid shells that allow for the diffusion of macromolecules. CA also has nucleocapsid-like chaperone activity, promoting primer tRNA(i)-Met annealing to the multipartite primer-binding site (PBS), dimerization of Ty1 RNA and initiation of reverse transcription. This chain is Transposon Ty1-MR1 Gag polyprotein (TY1A-MR1), found in Saccharomyces cerevisiae (strain ATCC 204508 / S288c) (Baker's yeast).